A 679-amino-acid polypeptide reads, in one-letter code: Protein hook (679 aa).

Residues 1–155 (MSAPKNEMYY…NIMRALQELE (155 aa)) are interaction with microtubules. The 118-residue stretch at 6–123 (NEMYYSLLEW…RLLQLVLGCA (118 aa)) folds into the Calponin-homology (CH) domain. 2 coiled-coil regions span residues 135–437 (EIMC…LKCG) and 480–574 (QTAL…QEIL).

This sequence belongs to the hook family. In terms of assembly, homodimer. Interacts with microtubules via its N-terminus.

The protein resides in the cytoplasm. The protein localises to the cytoskeleton. It is found in the endosome. It localises to the synapse. Functionally, involved in endocytic trafficking by stabilizing organelles of the endocytic pathway. Probably acts as a cytoskeletal linker protein required to tether endosome vesicles to the cytoskeleton. Involved in modulation of endocytosis at stages required for down-regulation of membrane proteins that control synapse size. Not involved in synaptic vesicle recycling. Required in R7 cells for boss endocytosis into multivesicular bodies (MVBs). Has a role in regulating adult longevity. The protein is Protein hook of Drosophila melanogaster (Fruit fly).